We begin with the raw amino-acid sequence, 493 residues long: Protein nucleotidyltransferase YdiU (493 aa).

8 residues coordinate ATP: G94, G96, R97, K117, D129, G130, R180, and R187. D256 serves as the catalytic Proton acceptor. The Mg(2+) site is built by N257 and D266. D266 provides a ligand contact to ATP.

The protein belongs to the SELO family. It depends on Mg(2+) as a cofactor. Mn(2+) serves as cofactor.

The catalysed reaction is L-seryl-[protein] + ATP = 3-O-(5'-adenylyl)-L-seryl-[protein] + diphosphate. It catalyses the reaction L-threonyl-[protein] + ATP = 3-O-(5'-adenylyl)-L-threonyl-[protein] + diphosphate. It carries out the reaction L-tyrosyl-[protein] + ATP = O-(5'-adenylyl)-L-tyrosyl-[protein] + diphosphate. The enzyme catalyses L-histidyl-[protein] + UTP = N(tele)-(5'-uridylyl)-L-histidyl-[protein] + diphosphate. The catalysed reaction is L-seryl-[protein] + UTP = O-(5'-uridylyl)-L-seryl-[protein] + diphosphate. It catalyses the reaction L-tyrosyl-[protein] + UTP = O-(5'-uridylyl)-L-tyrosyl-[protein] + diphosphate. Nucleotidyltransferase involved in the post-translational modification of proteins. It can catalyze the addition of adenosine monophosphate (AMP) or uridine monophosphate (UMP) to a protein, resulting in modifications known as AMPylation and UMPylation. In Hahella chejuensis (strain KCTC 2396), this protein is Protein nucleotidyltransferase YdiU.